A 109-amino-acid chain; its full sequence is Parvalbumin alpha (109 aa).

Serine 1 carries the N-acetylserine modification. EF-hand domains are found at residues 38–73 (KSDAELAEIFNVLDGDQSGYIEVEELKNFLKCFSDG) and 77–109 (LNDKETSNFLAAGDSDGDHKIGVDEFKSMAKMT). The Ca(2+) site is built by aspartate 51, aspartate 53, serine 55, tyrosine 57, glutamate 59, glutamate 62, aspartate 90, aspartate 92, aspartate 94, lysine 96, and glutamate 101.

This sequence belongs to the parvalbumin family. As to quaternary structure, monomer.

Functionally, in muscle, parvalbumin is thought to be involved in relaxation after contraction. It binds two calcium ions. The sequence is that of Parvalbumin alpha from Raja clavata (Thornback ray).